The following is a 92-amino-acid chain: Small ribosomal subunit protein uS19 (92 aa).

Belongs to the universal ribosomal protein uS19 family.

In terms of biological role, protein S19 forms a complex with S13 that binds strongly to the 16S ribosomal RNA. In Rhodospirillum rubrum (strain ATCC 11170 / ATH 1.1.1 / DSM 467 / LMG 4362 / NCIMB 8255 / S1), this protein is Small ribosomal subunit protein uS19.